The following is a 238-amino-acid chain: Small ribosomal subunit protein uS3 (238 aa).

In terms of domain architecture, KH type-2 spans 39–107; it reads MREFIHDYAK…ELHLNIVEIR (69 aa). The segment covering 212 to 222 has biased composition (basic and acidic residues); sequence PQAHDRRHSEA. The disordered stretch occupies residues 212-238; sequence PQAHDRRHSEAQEGAAPRPPRRDRERA.

This sequence belongs to the universal ribosomal protein uS3 family. As to quaternary structure, part of the 30S ribosomal subunit. Forms a tight complex with proteins S10 and S14.

Binds the lower part of the 30S subunit head. Binds mRNA in the 70S ribosome, positioning it for translation. The chain is Small ribosomal subunit protein uS3 from Cereibacter sphaeroides (strain ATCC 17029 / ATH 2.4.9) (Rhodobacter sphaeroides).